The sequence spans 122 residues: UPF0102 protein Mpe_A3766 (122 aa).

It belongs to the UPF0102 family.

In Methylibium petroleiphilum (strain ATCC BAA-1232 / LMG 22953 / PM1), this protein is UPF0102 protein Mpe_A3766.